The chain runs to 390 residues: GTPase Obg (390 aa).

In terms of domain architecture, Obg spans 1-159 (MKFIDESLIR…RDLLLELMLL (159 aa)). The 174-residue stretch at 160 to 333 (ADVGMLGLPN…LCRDIMDFII (174 aa)) folds into the OBG-type G domain. Residues 166–173 (GLPNAGKS), 191–195 (FTTLV), 213–216 (DIPG), 283–286 (NKID), and 314–316 (SAA) each bind GTP. Residues S173 and T193 each contribute to the Mg(2+) site.

The protein belongs to the TRAFAC class OBG-HflX-like GTPase superfamily. OBG GTPase family. As to quaternary structure, monomer. The cofactor is Mg(2+).

The protein localises to the cytoplasm. In terms of biological role, an essential GTPase which binds GTP, GDP and possibly (p)ppGpp with moderate affinity, with high nucleotide exchange rates and a fairly low GTP hydrolysis rate. Plays a role in control of the cell cycle, stress response, ribosome biogenesis and in those bacteria that undergo differentiation, in morphogenesis control. This chain is GTPase Obg, found in Haemophilus influenzae (strain 86-028NP).